Reading from the N-terminus, the 508-residue chain is Bifunctional purine biosynthesis protein PurH (508 aa).

Positions 1 to 144 (MTRALLSVSD…KNFASVLPIV (144 aa)) constitute an MGS-like domain.

Belongs to the PurH family.

The catalysed reaction is (6R)-10-formyltetrahydrofolate + 5-amino-1-(5-phospho-beta-D-ribosyl)imidazole-4-carboxamide = 5-formamido-1-(5-phospho-D-ribosyl)imidazole-4-carboxamide + (6S)-5,6,7,8-tetrahydrofolate. It catalyses the reaction IMP + H2O = 5-formamido-1-(5-phospho-D-ribosyl)imidazole-4-carboxamide. The protein operates within purine metabolism; IMP biosynthesis via de novo pathway; 5-formamido-1-(5-phospho-D-ribosyl)imidazole-4-carboxamide from 5-amino-1-(5-phospho-D-ribosyl)imidazole-4-carboxamide (10-formyl THF route): step 1/1. It functions in the pathway purine metabolism; IMP biosynthesis via de novo pathway; IMP from 5-formamido-1-(5-phospho-D-ribosyl)imidazole-4-carboxamide: step 1/1. This is Bifunctional purine biosynthesis protein PurH from Leuconostoc mesenteroides subsp. mesenteroides (strain ATCC 8293 / DSM 20343 / BCRC 11652 / CCM 1803 / JCM 6124 / NCDO 523 / NBRC 100496 / NCIMB 8023 / NCTC 12954 / NRRL B-1118 / 37Y).